The primary structure comprises 104 residues: Putative membrane protein insertion efficiency factor (104 aa).

A disordered region spans residues 83 to 104 (SSPTPLAESPDDRTVPHTQETS).

This sequence belongs to the UPF0161 family.

It localises to the cell inner membrane. Functionally, could be involved in insertion of integral membrane proteins into the membrane. This chain is Putative membrane protein insertion efficiency factor, found in Chlamydia trachomatis serovar D (strain ATCC VR-885 / DSM 19411 / UW-3/Cx).